The following is a 483-amino-acid chain: UDP-N-acetylmuramate--L-alanine ligase (483 aa).

112 to 118 (GTHGKTT) serves as a coordination point for ATP.

Belongs to the MurCDEF family.

The protein resides in the cytoplasm. The enzyme catalyses UDP-N-acetyl-alpha-D-muramate + L-alanine + ATP = UDP-N-acetyl-alpha-D-muramoyl-L-alanine + ADP + phosphate + H(+). The protein operates within cell wall biogenesis; peptidoglycan biosynthesis. Its function is as follows. Cell wall formation. This Ralstonia nicotianae (strain ATCC BAA-1114 / GMI1000) (Ralstonia solanacearum) protein is UDP-N-acetylmuramate--L-alanine ligase.